Consider the following 361-residue polypeptide: Phosphoserine aminotransferase (361 aa).

Residue arginine 43 coordinates L-glutamate. Residues 77–78 (AS), tryptophan 103, threonine 152, aspartate 172, and glutamine 195 each bind pyridoxal 5'-phosphate. Lysine 196 bears the N6-(pyridoxal phosphate)lysine mark. Residue 237 to 238 (NT) participates in pyridoxal 5'-phosphate binding.

Belongs to the class-V pyridoxal-phosphate-dependent aminotransferase family. SerC subfamily. As to quaternary structure, homodimer. Pyridoxal 5'-phosphate serves as cofactor.

Its subcellular location is the cytoplasm. It carries out the reaction O-phospho-L-serine + 2-oxoglutarate = 3-phosphooxypyruvate + L-glutamate. The enzyme catalyses 4-(phosphooxy)-L-threonine + 2-oxoglutarate = (R)-3-hydroxy-2-oxo-4-phosphooxybutanoate + L-glutamate. Its pathway is amino-acid biosynthesis; L-serine biosynthesis; L-serine from 3-phospho-D-glycerate: step 2/3. The protein operates within cofactor biosynthesis; pyridoxine 5'-phosphate biosynthesis; pyridoxine 5'-phosphate from D-erythrose 4-phosphate: step 3/5. Catalyzes the reversible conversion of 3-phosphohydroxypyruvate to phosphoserine and of 3-hydroxy-2-oxo-4-phosphonooxybutanoate to phosphohydroxythreonine. This is Phosphoserine aminotransferase from Desulfosudis oleivorans (strain DSM 6200 / JCM 39069 / Hxd3) (Desulfococcus oleovorans).